Here is a 476-residue protein sequence, read N- to C-terminus: Exodeoxyribonuclease 7 large subunit (476 aa).

Belongs to the XseA family. In terms of assembly, heterooligomer composed of large and small subunits.

It is found in the cytoplasm. The catalysed reaction is Exonucleolytic cleavage in either 5'- to 3'- or 3'- to 5'-direction to yield nucleoside 5'-phosphates.. Bidirectionally degrades single-stranded DNA into large acid-insoluble oligonucleotides, which are then degraded further into small acid-soluble oligonucleotides. This chain is Exodeoxyribonuclease 7 large subunit, found in Bartonella tribocorum (strain CIP 105476 / IBS 506).